Here is a 193-residue protein sequence, read N- to C-terminus: Holliday junction branch migration complex subunit RuvA (193 aa).

Positions 1-64 (MIGRIAGVLL…EDAHLLYGFG (64 aa)) are domain I. The segment at 65–139 (TAEERSTFRE…GKIGADLGAM (75 aa)) is domain II. Positions 139-143 (MAGAA) are flexible linker. Residues 144 to 193 (SASDHASDILNALLALGYSEKEALAAVKNVPAGTGVSEGIKLALKALSKG) form a domain III region.

It belongs to the RuvA family. In terms of assembly, homotetramer. Forms an RuvA(8)-RuvB(12)-Holliday junction (HJ) complex. HJ DNA is sandwiched between 2 RuvA tetramers; dsDNA enters through RuvA and exits via RuvB. An RuvB hexamer assembles on each DNA strand where it exits the tetramer. Each RuvB hexamer is contacted by two RuvA subunits (via domain III) on 2 adjacent RuvB subunits; this complex drives branch migration. In the full resolvosome a probable DNA-RuvA(4)-RuvB(12)-RuvC(2) complex forms which resolves the HJ.

The protein resides in the cytoplasm. The RuvA-RuvB-RuvC complex processes Holliday junction (HJ) DNA during genetic recombination and DNA repair, while the RuvA-RuvB complex plays an important role in the rescue of blocked DNA replication forks via replication fork reversal (RFR). RuvA specifically binds to HJ cruciform DNA, conferring on it an open structure. The RuvB hexamer acts as an ATP-dependent pump, pulling dsDNA into and through the RuvAB complex. HJ branch migration allows RuvC to scan DNA until it finds its consensus sequence, where it cleaves and resolves the cruciform DNA. The chain is Holliday junction branch migration complex subunit RuvA from Paraburkholderia xenovorans (strain LB400).